The sequence spans 553 residues: Hydroxylamine reductase (553 aa).

Cys3, Cys6, Cys18, and Cys25 together coordinate [2Fe-2S] cluster. Residues His252, Glu276, Cys320, Cys408, Cys436, Cys461, Glu495, and Lys497 each contribute to the hybrid [4Fe-2O-2S] cluster site. Residue Cys408 is modified to Cysteine persulfide.

This sequence belongs to the HCP family. [2Fe-2S] cluster serves as cofactor. Hybrid [4Fe-2O-2S] cluster is required as a cofactor.

The protein localises to the cytoplasm. It catalyses the reaction A + NH4(+) + H2O = hydroxylamine + AH2 + H(+). Catalyzes the reduction of hydroxylamine to form NH(3) and H(2)O. This Vibrio vulnificus (strain YJ016) protein is Hydroxylamine reductase.